Here is a 155-residue protein sequence, read N- to C-terminus: Transcription antitermination protein NusB (155 aa).

It belongs to the NusB family.

Involved in transcription antitermination. Required for transcription of ribosomal RNA (rRNA) genes. Binds specifically to the boxA antiterminator sequence of the ribosomal RNA (rrn) operons. This chain is Transcription antitermination protein NusB, found in Vibrio vulnificus (strain CMCP6).